Consider the following 383-residue polypeptide: Putative dehydratase subunit YjiM (383 aa).

Belongs to the FldB/FldC dehydratase alpha/beta subunit family.

The chain is Putative dehydratase subunit YjiM (yjiM) from Escherichia coli (strain K12).